The primary structure comprises 478 residues: Glycogen synthase (478 aa).

ADP-alpha-D-glucose is bound at residue Lys15.

This sequence belongs to the glycosyltransferase 1 family. Bacterial/plant glycogen synthase subfamily.

It catalyses the reaction [(1-&gt;4)-alpha-D-glucosyl](n) + ADP-alpha-D-glucose = [(1-&gt;4)-alpha-D-glucosyl](n+1) + ADP + H(+). Its pathway is glycan biosynthesis; glycogen biosynthesis. Functionally, synthesizes alpha-1,4-glucan chains using ADP-glucose. The sequence is that of Glycogen synthase from Acholeplasma laidlawii (strain PG-8A).